Here is a 440-residue protein sequence, read N- to C-terminus: Suppressor of cytokine signaling 4 (440 aa).

The span at 1-11 (MAENSESNSKN) shows a compositional bias: polar residues. The segment at 1-29 (MAENSESNSKNVDVRPKTSRSRSADRKDG) is disordered. Residues 12–29 (VDVRPKTSRSRSADRKDG) show a composition bias toward basic and acidic residues. The region spanning 286–381 (CYWGVMDKYA…FFEPLLSTPL (96 aa)) is the SH2 domain. The SOCS box domain occupies 376-425 (LLSTPLIRTFPFSLQHICRTVICNCTTYDGIDALPIPSSMKLYLKEYHYK).

It functions in the pathway protein modification; protein ubiquitination. In terms of biological role, SOCS family proteins form part of a classical negative feedback system that regulates cytokine signal transduction. Substrate-recognition component of a SCF-like ECS (Elongin BC-CUL2/5-SOCS-box protein) E3 ubiquitin-protein ligase complex which mediates the ubiquitination and subsequent proteasomal degradation of target proteins. Inhibits EGF signaling by mediating the degradation of the Tyr-phosphorylated EGF receptor/EGFR. The protein is Suppressor of cytokine signaling 4 (SOCS4) of Bos taurus (Bovine).